The following is a 389-amino-acid chain: Succinate--CoA ligase [ADP-forming] subunit beta (389 aa).

In terms of domain architecture, ATP-grasp spans 9–244 (KKLFADYGLP…LTQEDPREAE (236 aa)). ATP contacts are provided by residues lysine 46, 53–55 (GRG), glutamate 99, alanine 102, and glutamate 107. The Mg(2+) site is built by asparagine 199 and aspartate 213. Substrate is bound by residues asparagine 264 and 321-323 (GIV).

The protein belongs to the succinate/malate CoA ligase beta subunit family. As to quaternary structure, heterotetramer of two alpha and two beta subunits. The cofactor is Mg(2+).

The catalysed reaction is succinate + ATP + CoA = succinyl-CoA + ADP + phosphate. It catalyses the reaction GTP + succinate + CoA = succinyl-CoA + GDP + phosphate. It functions in the pathway carbohydrate metabolism; tricarboxylic acid cycle; succinate from succinyl-CoA (ligase route): step 1/1. Functionally, succinyl-CoA synthetase functions in the citric acid cycle (TCA), coupling the hydrolysis of succinyl-CoA to the synthesis of either ATP or GTP and thus represents the only step of substrate-level phosphorylation in the TCA. The beta subunit provides nucleotide specificity of the enzyme and binds the substrate succinate, while the binding sites for coenzyme A and phosphate are found in the alpha subunit. This chain is Succinate--CoA ligase [ADP-forming] subunit beta, found in Histophilus somni (strain 2336) (Haemophilus somnus).